We begin with the raw amino-acid sequence, 344 residues long: Histone-lysine N-methyltransferase, H3 lysine-9 specific KMT1 (344 aa).

One can recognise a Pre-SET domain in the interval 79–174; the sequence is SGCSCAKDSE…DCPNRVVERG (96 aa). Zn(2+) is bound by residues cysteine 81, cysteine 83, cysteine 89, cysteine 94, cysteine 96, cysteine 156, cysteine 160, cysteine 162, cysteine 166, and cysteine 272. Positions 177-312 constitute an SET domain; the sequence is IPLEIFRTPD…EGEELTFDYV (136 aa). Tyrosine 311 contacts S-adenosyl-L-methionine. In terms of domain architecture, Post-SET spans 328–344; it reads HMTRCLCGSKKCRKFLW. Cysteine 332, cysteine 334, and cysteine 339 together coordinate Zn(2+).

The protein belongs to the class V-like SAM-binding methyltransferase superfamily.

The protein localises to the chromosome. The catalysed reaction is L-lysyl(9)-[histone H3] + 3 S-adenosyl-L-methionine = N(6),N(6),N(6)-trimethyl-L-lysyl(9)-[histone H3] + 3 S-adenosyl-L-homocysteine + 3 H(+). Functionally, histone methyltransferase that specifically trimethylates histone H3 to form H3K9me3. H3K9me3 marks chromatin regions for DNA methylation. Plays a key role in the regulation of the biosynthesis of the gamma-pyrones fusapyrone (FPY) and deoxyfusapyrone (dFPY). This is Histone-lysine N-methyltransferase, H3 lysine-9 specific KMT1 from Fusarium mangiferae (Mango malformation disease fungus).